We begin with the raw amino-acid sequence, 110 residues long: Eukaryotic translation initiation factor eIF1 (110 aa).

T40 is modified (phosphothreonine).

Belongs to the SUI1 family.

Functionally, probably involved in translation. In Drosophila melanogaster (Fruit fly), this protein is Eukaryotic translation initiation factor eIF1.